Here is an 885-residue protein sequence, read N- to C-terminus: GPI ethanolamine phosphate transferase 2 (885 aa).

N-linked (GlcNAc...) asparagine glycans are attached at residues asparagine 82, asparagine 155, and asparagine 194. The chain crosses the membrane as a helical span at residues 413–433 (DIYAGALILVITALAVIVVFN). Residue asparagine 443 is glycosylated (N-linked (GlcNAc...) asparagine). 3 helical membrane passes run 447–467 (VMFY…SSLI), 473–493 (IWYF…FDTF), and 495–514 (SLQN…FMRS). Asparagine 516 is a glycosylation site (N-linked (GlcNAc...) asparagine). Transmembrane regions (helical) follow at residues 539-559 (LMWG…YIQG), 581-601 (GLIS…FKLL), 648-668 (IQLS…RVII), 697-717 (ENIP…KLIY), 726-746 (YILT…FCMG), 768-788 (VFLV…FWSL), 820-840 (ILLV…VNLV), and 865-885 (SWIL…VLLF).

The protein belongs to the PIGG/PIGN/PIGO family. PIGG subfamily.

It localises to the endoplasmic reticulum membrane. It functions in the pathway glycolipid biosynthesis; glycosylphosphatidylinositol-anchor biosynthesis. Its function is as follows. Ethanolamine phosphate transferase involved in glycosylphosphatidylinositol-anchor biosynthesis. Transfers ethanolamine phosphate to the GPI second mannose. The protein is GPI ethanolamine phosphate transferase 2 (GPI7) of Candida albicans (strain SC5314 / ATCC MYA-2876) (Yeast).